Here is a 109-residue protein sequence, read N- to C-terminus: Anti-sigma-B factor antagonist (109 aa).

In terms of domain architecture, STAS spans 3 to 109; sequence INVDVKQNEN…ISAKSEGGVQ (107 aa). Residues S52 and S56 each carry the phosphoserine modification. T57 carries the post-translational modification Phosphothreonine.

It belongs to the anti-sigma-factor antagonist family. Monomer. In stressed cells, forms a complex with RsbW. The predominant form of this complex has a stoichiometry of 2:2 (one dimer of RsbW is bound by two monomers of RsbV). Binds to RsbW in the presence of low levels of ATP or under conditions of energy or environmental stress (through dephosphorylation by RsbP or RsbU). Phosphorylated by RsbW on a serine residue. Dephosphorylated by RsbP or RsbU.

In terms of biological role, positive regulator of sigma-B activity. Non-phosphorylated RsbV binds to RsbW, preventing its association with sigma-B. When phosphorylated, releases RsbW, which is then free to complex with and inactivate sigma-B. The chain is Anti-sigma-B factor antagonist (rsbV) from Bacillus subtilis (strain 168).